The sequence spans 419 residues: Cysteine desulfurase (419 aa).

Pyridoxal 5'-phosphate contacts are provided by residues 69 to 70 (AT), asparagine 157, glutamine 185, and 205 to 207 (SAH). An N6-(pyridoxal phosphate)lysine modification is found at lysine 208. Threonine 245 is a pyridoxal 5'-phosphate binding site. The Cysteine persulfide intermediate role is filled by cysteine 333. Residue cysteine 333 coordinates [2Fe-2S] cluster. The disordered stretch occupies residues 392–419 (TPIQDEVRDDNRASSNSLNRGSAASKES). Over residues 404 to 413 (ASSNSLNRGS) the composition is skewed to polar residues.

This sequence belongs to the class-V pyridoxal-phosphate-dependent aminotransferase family. NifS/IscS subfamily. As to quaternary structure, homodimer. The cofactor is pyridoxal 5'-phosphate.

It carries out the reaction (sulfur carrier)-H + L-cysteine = (sulfur carrier)-SH + L-alanine. Catalyzes the removal of elemental sulfur atoms from cysteine to produce alanine. Seems to participate in the biosynthesis of the nitrogenase metalloclusters by providing the inorganic sulfur required for the Fe-S core formation. This is Cysteine desulfurase from Frankia sp. (strain EuIK1).